The sequence spans 122 residues: Large ribosomal subunit protein uL14 (122 aa).

Belongs to the universal ribosomal protein uL14 family. Part of the 50S ribosomal subunit. Forms a cluster with proteins L3 and L19. In the 70S ribosome, L14 and L19 interact and together make contacts with the 16S rRNA in bridges B5 and B8.

In terms of biological role, binds to 23S rRNA. Forms part of two intersubunit bridges in the 70S ribosome. The protein is Large ribosomal subunit protein uL14 of Alkaliphilus oremlandii (strain OhILAs) (Clostridium oremlandii (strain OhILAs)).